Reading from the N-terminus, the 98-residue chain is Large ribosomal subunit protein uL23 (98 aa).

Belongs to the universal ribosomal protein uL23 family. In terms of assembly, part of the 50S ribosomal subunit. Contacts protein L29, and trigger factor when it is bound to the ribosome.

Functionally, one of the early assembly proteins it binds 23S rRNA. One of the proteins that surrounds the polypeptide exit tunnel on the outside of the ribosome. Forms the main docking site for trigger factor binding to the ribosome. The protein is Large ribosomal subunit protein uL23 of Lactobacillus delbrueckii subsp. bulgaricus (strain ATCC 11842 / DSM 20081 / BCRC 10696 / JCM 1002 / NBRC 13953 / NCIMB 11778 / NCTC 12712 / WDCM 00102 / Lb 14).